A 336-amino-acid polypeptide reads, in one-letter code: Probable G-protein coupled receptor 160 (336 aa).

At 1–20 (MTALSSKNCSLQYQLHQSPQ) the chain is on the extracellular side. N-linked (GlcNAc...) asparagine glycosylation is present at N8. The helical transmembrane segment at 21–41 (LLEASCLLFLIILGKVLLNIL) threads the bilayer. The Cytoplasmic portion of the chain corresponds to 42–56 (LLRVRRGDARWTLME). Residues 57 to 77 (YFCFSLALVDLLLLVNISILT) traverse the membrane as a helical segment. At 78–95 (YFRDFVVLGIRFTRYHIC) the chain is on the extracellular side. A helical transmembrane segment spans residues 96–116 (LLTQIISFTYGFLHYPVCSLA). Residues 117–136 (CIDYWCNLSRASKQSSRWQK) are Cytoplasmic-facing. Residues 137 to 157 (LLYFLTVILTWISVLAYVLVD) form a helical membrane-spanning segment. The Extracellular segment spans residues 158–186 (PAISVSLKAHRGYVYQCPAYVSTQSHWLS). The helical transmembrane segment at 187-207 (LSMLMVLFVAFLISWQEVVAL) threads the bilayer. At 208 to 243 (LQAMRIASYKSKAALYFPFPLHCGYALSCREALLPR) the chain is on the cytoplasmic side. Residues 244–264 (LIVCFLGTWFPFVALQVLILS) traverse the membrane as a helical segment. Over 265 to 272 (LRVQIPAY) the chain is Extracellular. The helical transmembrane segment at 273–293 (IEMNVPWLYFVNSFLIAAVYW) threads the bilayer. Residues 294–336 (FNCHKLDLRDSSLPVDPFINWKCCFVPVHRLKQVERPMSIVIC) are Cytoplasmic-facing.

It belongs to the G-protein coupled receptor 1 family.

Its subcellular location is the cell membrane. In terms of biological role, orphan receptor. The polypeptide is Probable G-protein coupled receptor 160 (Gpr160) (Mus musculus (Mouse)).